The primary structure comprises 955 residues: Outer capsid protein VP2 (955 aa).

The protein belongs to the orbivirus VP2 family.

The protein localises to the virion. Its function is as follows. The VP2 protein is one of the two proteins (with VP5) which constitute the virus particle outer capsid. It is the major target of the host immunogenic response. Responsible for viral attachment to target host cell, probably by binding to sialic acid. This attachment induces virion internalization predominantly through clathrin-dependent endocytosis. The sequence is that of Outer capsid protein VP2 (Segment-2) from Antilocapra americana (Pronghorn).